We begin with the raw amino-acid sequence, 302 residues long: Sulfate adenylyltransferase subunit 2 (302 aa).

The protein belongs to the PAPS reductase family. CysD subfamily. In terms of assembly, heterodimer composed of CysD, the smaller subunit, and CysN.

It catalyses the reaction sulfate + ATP + H(+) = adenosine 5'-phosphosulfate + diphosphate. It participates in sulfur metabolism; hydrogen sulfide biosynthesis; sulfite from sulfate: step 1/3. Functionally, with CysN forms the ATP sulfurylase (ATPS) that catalyzes the adenylation of sulfate producing adenosine 5'-phosphosulfate (APS) and diphosphate, the first enzymatic step in sulfur assimilation pathway. APS synthesis involves the formation of a high-energy phosphoric-sulfuric acid anhydride bond driven by GTP hydrolysis by CysN coupled to ATP hydrolysis by CysD. In Enterobacter sp. (strain 638), this protein is Sulfate adenylyltransferase subunit 2.